The chain runs to 715 residues: Fatty acid oxidation complex subunit alpha (715 aa).

Residues 1 to 190 (MTTTSAFMLN…KAGLVDDVVP (190 aa)) are enoyl-CoA hydratase. A 3-hydroxyacyl-CoA dehydrogenase region spans residues 306-714 (GPLNSVGILG…FWTNGETDQG (409 aa)).

The protein in the N-terminal section; belongs to the enoyl-CoA hydratase/isomerase family. It in the central section; belongs to the 3-hydroxyacyl-CoA dehydrogenase family. In terms of assembly, heterotetramer of two alpha chains (FadJ) and two beta chains (FadI).

The protein localises to the cytoplasm. The catalysed reaction is a (3S)-3-hydroxyacyl-CoA = a (2E)-enoyl-CoA + H2O. It catalyses the reaction a 4-saturated-(3S)-3-hydroxyacyl-CoA = a (3E)-enoyl-CoA + H2O. The enzyme catalyses a (3S)-3-hydroxyacyl-CoA + NAD(+) = a 3-oxoacyl-CoA + NADH + H(+). It carries out the reaction (3S)-3-hydroxybutanoyl-CoA = (3R)-3-hydroxybutanoyl-CoA. It participates in lipid metabolism; fatty acid beta-oxidation. Its function is as follows. Catalyzes the formation of a hydroxyacyl-CoA by addition of water on enoyl-CoA. Also exhibits 3-hydroxyacyl-CoA epimerase and 3-hydroxyacyl-CoA dehydrogenase activities. This is Fatty acid oxidation complex subunit alpha from Salmonella typhimurium (strain LT2 / SGSC1412 / ATCC 700720).